A 363-amino-acid chain; its full sequence is Probable mannitol dehydrogenase 3 (363 aa).

7 residues coordinate Zn(2+): Cys51, His73, Cys104, Cys107, Cys110, Cys118, and Cys168.

This sequence belongs to the zinc-containing alcohol dehydrogenase family. The cofactor is Zn(2+).

It catalyses the reaction D-mannitol + NAD(+) = D-mannose + NADH + H(+). Functionally, oxidizes mannitol to mannose. Provides the initial step by which translocated mannitol is committed to central metabolism and, by regulating mannitol pool size, is important in regulating salt tolerance at the cellular level. The sequence is that of Probable mannitol dehydrogenase 3 (CAD3) from Stylosanthes humilis (Townsville stylo).